Consider the following 193-residue polypeptide: Peptidyl-tRNA hydrolase (193 aa).

Residue Tyr17 coordinates tRNA. His22 functions as the Proton acceptor in the catalytic mechanism. TRNA contacts are provided by Phe68, Asn70, and Asn115.

Belongs to the PTH family. As to quaternary structure, monomer.

It localises to the cytoplasm. It catalyses the reaction an N-acyl-L-alpha-aminoacyl-tRNA + H2O = an N-acyl-L-amino acid + a tRNA + H(+). In terms of biological role, hydrolyzes ribosome-free peptidyl-tRNAs (with 1 or more amino acids incorporated), which drop off the ribosome during protein synthesis, or as a result of ribosome stalling. Its function is as follows. Catalyzes the release of premature peptidyl moieties from peptidyl-tRNA molecules trapped in stalled 50S ribosomal subunits, and thus maintains levels of free tRNAs and 50S ribosomes. This Alteromonas mediterranea (strain DSM 17117 / CIP 110805 / LMG 28347 / Deep ecotype) protein is Peptidyl-tRNA hydrolase.